A 375-amino-acid polypeptide reads, in one-letter code: Probable trehalose-phosphate phosphatase 7 (375 aa).

Belongs to the trehalose phosphatase family. The cofactor is a divalent metal cation.

It catalyses the reaction alpha,alpha-trehalose 6-phosphate + H2O = alpha,alpha-trehalose + phosphate. Its pathway is glycan biosynthesis; trehalose biosynthesis. Functionally, removes the phosphate from trehalose 6-phosphate to produce free trehalose. Trehalose accumulation in plant may improve abiotic stress tolerance. This chain is Probable trehalose-phosphate phosphatase 7 (TPP7), found in Oryza sativa subsp. japonica (Rice).